A 396-amino-acid chain; its full sequence is S-adenosylmethionine synthase (396 aa).

H16 provides a ligand contact to ATP. A Mg(2+)-binding site is contributed by D18. Residue E44 coordinates K(+). L-methionine-binding residues include E57 and Q100. Residues 100–110 (QSQDIARGVDN) are flexible loop. ATP is bound by residues 162–164 (DGK), D237, 243–244 (RK), A260, and K264. D237 provides a ligand contact to L-methionine. K268 lines the L-methionine pocket.

Belongs to the AdoMet synthase family. As to quaternary structure, homotetramer; dimer of dimers. Mg(2+) is required as a cofactor. It depends on K(+) as a cofactor.

It localises to the cytoplasm. It catalyses the reaction L-methionine + ATP + H2O = S-adenosyl-L-methionine + phosphate + diphosphate. The protein operates within amino-acid biosynthesis; S-adenosyl-L-methionine biosynthesis; S-adenosyl-L-methionine from L-methionine: step 1/1. Functionally, catalyzes the formation of S-adenosylmethionine (AdoMet) from methionine and ATP. The overall synthetic reaction is composed of two sequential steps, AdoMet formation and the subsequent tripolyphosphate hydrolysis which occurs prior to release of AdoMet from the enzyme. The chain is S-adenosylmethionine synthase from Myxococcus xanthus.